A 196-amino-acid polypeptide reads, in one-letter code: Phosphate-specific transport system accessory protein PhoU homolog (196 aa).

It belongs to the PhoU family. In terms of assembly, homodimer.

It is found in the cytoplasm. Its function is as follows. Plays a role in the regulation of phosphate uptake. The protein is Phosphate-specific transport system accessory protein PhoU homolog of Archaeoglobus fulgidus (strain ATCC 49558 / DSM 4304 / JCM 9628 / NBRC 100126 / VC-16).